The chain runs to 239 residues: Purine nucleoside phosphorylase DeoD-type 1 (239 aa).

Residue His5 coordinates a purine D-ribonucleoside. Residues Gly21, Arg25, Arg44, and 88 to 91 each bind phosphate; that span reads RVGS. Residues 180–182 and 204–205 each bind a purine D-ribonucleoside; these read EME and SD. Asp205 acts as the Proton donor in catalysis.

It belongs to the PNP/UDP phosphorylase family. Homohexamer; trimer of homodimers.

The enzyme catalyses a purine D-ribonucleoside + phosphate = a purine nucleobase + alpha-D-ribose 1-phosphate. The catalysed reaction is a purine 2'-deoxy-D-ribonucleoside + phosphate = a purine nucleobase + 2-deoxy-alpha-D-ribose 1-phosphate. Catalyzes the reversible phosphorolytic breakdown of the N-glycosidic bond in the beta-(deoxy)ribonucleoside molecules, with the formation of the corresponding free purine bases and pentose-1-phosphate. In Vibrio vulnificus (strain CMCP6), this protein is Purine nucleoside phosphorylase DeoD-type 1.